A 237-amino-acid chain; its full sequence is Large ribosomal subunit protein uL22m (237 aa).

The protein belongs to the universal ribosomal protein uL22 family.

The protein localises to the mitochondrion. This chain is Large ribosomal subunit protein uL22m (mrpl22), found in Dictyostelium discoideum (Social amoeba).